The following is a 318-amino-acid chain: MQLEVNNMWISFSVRYLVNVEDLNNVESAGNYVRHRRAPLVFKDKDSYTVTYVPAVSGEMIAHGYQMNLVELALQRNLPVDSLAKQGILIKRGSDDKVHEGTKCTDEKGSDYELCVINEDIVEDVAGFMNPNKLVKRTSNVAFSYMVPAIDAVKASTISSQFHVRYANKELMDKYKNENIQSLYNIETASASYVLTGYLNVNSVGKTQNYPVKEVDKKKDREKAALDALMLTLTQFLFGAKLTRFKPIVEIEALFVSASEKPFNLPPVTGDIKKYIDLVNSTTDSFAKILNIKRPVVKYYLKEEKGNVNTPIDAFTVM.

It belongs to the CRISPR-associated protein Cas7/Cst2/DevR family. Subtype I-a/Apern subfamily. In terms of assembly, part of the aCascade ribonucleoprotein complex, minimally composed of Csa2 and Cas5a, which binds crRNA. Other possible components of aCascade in strain P1 are Cas6b (SSO1437) and Csa5 (SSO1443), while SSO1399, Cas5b (SSO1400) and SSO1401 have sometimes been seen weakly associated. Csa2 is probably the major RNA-binding subunit. The Csa2-Cas5a-crRNA complex also binds target DNA homologous to crRNA, probably forming an R-loop. Purified aCascade forms a filament about 6 nm in width.

CRISPR (clustered regularly interspaced short palindromic repeat) is an adaptive immune system that provides protection against mobile genetic elements (viruses, transposable elements and conjugative plasmids). CRISPR clusters contain spacers, sequences complementary to antecedent mobile elements, and target invading nucleic acids. CRISPR clusters are transcribed and processed into CRISPR RNA (crRNA). This is CRISPR-associated protein Cas7/Csa2 1 (cas7a) from Saccharolobus solfataricus (strain ATCC 35092 / DSM 1617 / JCM 11322 / P2) (Sulfolobus solfataricus).